The primary structure comprises 393 residues: 4-hydroxyphenylpyruvate dioxygenase (393 aa).

VOC domains lie at 17–148 (AFDH…LLER) and 179–339 (FLDH…IFSK). His-182, His-267, and Glu-350 together coordinate Fe cation.

Belongs to the 4HPPD family. Fe cation serves as cofactor. As to expression, expressed in the hypodermis and intestine.

It catalyses the reaction 3-(4-hydroxyphenyl)pyruvate + O2 = homogentisate + CO2. It participates in amino-acid degradation; L-phenylalanine degradation; acetoacetate and fumarate from L-phenylalanine: step 3/6. Its function is as follows. Key enzyme in the degradation of tyrosine. The chain is 4-hydroxyphenylpyruvate dioxygenase from Caenorhabditis elegans.